The chain runs to 211 residues: Protein-methionine-sulfoxide reductase heme-binding subunit MsrQ (211 aa).

6 helical membrane-spanning segments follow: residues 8–28, 54–74, 82–102, 116–136, 153–173, and 178–198; these read VIWL…WLVW, FLLA…PLLI, LWCF…ELGV, PYLT…FTST, FVYL…KIIS, and IYAG…LSLF.

It belongs to the MsrQ family. As to quaternary structure, heterodimer of a catalytic subunit (MsrP) and a heme-binding subunit (MsrQ). The cofactor is FMN. Heme b serves as cofactor.

The protein resides in the cell inner membrane. Functionally, part of the MsrPQ system that repairs oxidized periplasmic proteins containing methionine sulfoxide residues (Met-O), using respiratory chain electrons. Thus protects these proteins from oxidative-stress damage caused by reactive species of oxygen and chlorine generated by the host defense mechanisms. MsrPQ is essential for the maintenance of envelope integrity under bleach stress, rescuing a wide series of structurally unrelated periplasmic proteins from methionine oxidation, including the primary periplasmic chaperone SurA and the lipoprotein Pal. MsrQ provides electrons for reduction to the reductase catalytic subunit MsrP, using the quinone pool of the respiratory chain. This Shigella flexneri protein is Protein-methionine-sulfoxide reductase heme-binding subunit MsrQ.